We begin with the raw amino-acid sequence, 444 residues long: Trigger factor (444 aa).

Residues 166–251 enclose the PPIase FKBP-type domain; sequence GDQVVIDFKG…VKAVKAPKAA (86 aa).

The protein belongs to the FKBP-type PPIase family. Tig subfamily.

The protein resides in the cytoplasm. It carries out the reaction [protein]-peptidylproline (omega=180) = [protein]-peptidylproline (omega=0). Involved in protein export. Acts as a chaperone by maintaining the newly synthesized protein in an open conformation. Functions as a peptidyl-prolyl cis-trans isomerase. This is Trigger factor from Cereibacter sphaeroides (strain ATCC 17029 / ATH 2.4.9) (Rhodobacter sphaeroides).